The following is a 184-amino-acid chain: NADH-quinone oxidoreductase subunit B 1 (184 aa).

Residues Cys37, Cys38, Cys103, and Cys132 each coordinate [4Fe-4S] cluster.

This sequence belongs to the complex I 20 kDa subunit family. In terms of assembly, NDH-1 is composed of 14 different subunits. Subunits NuoB, C, D, E, F, and G constitute the peripheral sector of the complex. Requires [4Fe-4S] cluster as cofactor.

Its subcellular location is the cell membrane. The enzyme catalyses a quinone + NADH + 5 H(+)(in) = a quinol + NAD(+) + 4 H(+)(out). NDH-1 shuttles electrons from NADH, via FMN and iron-sulfur (Fe-S) centers, to quinones in the respiratory chain. The immediate electron acceptor for the enzyme in this species is believed to be a menaquinone. Couples the redox reaction to proton translocation (for every two electrons transferred, four hydrogen ions are translocated across the cytoplasmic membrane), and thus conserves the redox energy in a proton gradient. The protein is NADH-quinone oxidoreductase subunit B 1 of Streptomyces griseus subsp. griseus (strain JCM 4626 / CBS 651.72 / NBRC 13350 / KCC S-0626 / ISP 5235).